Consider the following 128-residue polypeptide: Azurin (128 aa).

A Plastocyanin-like domain is found at 1–128 (ACDVSIEGND…IMKGTIELGS (128 aa)). C2 and C25 are joined by a disulfide. Cu cation contacts are provided by H45, C111, H116, and M120.

As to quaternary structure, monomer. Interacts with the AAUA/AAUB heterotetramer complex. Cu cation serves as cofactor.

The protein resides in the periplasm. In terms of biological role, transfers electrons from cytochrome c551 to cytochrome oxidase. Transfers electrons from the tryptophan tryptophylquinone of the aromatic amine dehydrogenase heterotetramer. This is Azurin from Alcaligenes faecalis.